A 743-amino-acid polypeptide reads, in one-letter code: 1,4-alpha-glucan branching enzyme GlgB (743 aa).

D423 (nucleophile) is an active-site residue. The active-site Proton donor is the E476.

Belongs to the glycosyl hydrolase 13 family. GlgB subfamily. Monomer.

It catalyses the reaction Transfers a segment of a (1-&gt;4)-alpha-D-glucan chain to a primary hydroxy group in a similar glucan chain.. It functions in the pathway glycan biosynthesis; glycogen biosynthesis. In terms of biological role, catalyzes the formation of the alpha-1,6-glucosidic linkages in glycogen by scission of a 1,4-alpha-linked oligosaccharide from growing alpha-1,4-glucan chains and the subsequent attachment of the oligosaccharide to the alpha-1,6 position. The sequence is that of 1,4-alpha-glucan branching enzyme GlgB from Pseudomonas fluorescens (strain Pf0-1).